We begin with the raw amino-acid sequence, 883 residues long: Alanine--tRNA ligase (883 aa).

The Zn(2+) site is built by His560, His564, Cys665, and His669.

It belongs to the class-II aminoacyl-tRNA synthetase family. Zn(2+) serves as cofactor.

Its subcellular location is the cytoplasm. It catalyses the reaction tRNA(Ala) + L-alanine + ATP = L-alanyl-tRNA(Ala) + AMP + diphosphate. Its function is as follows. Catalyzes the attachment of alanine to tRNA(Ala) in a two-step reaction: alanine is first activated by ATP to form Ala-AMP and then transferred to the acceptor end of tRNA(Ala). Also edits incorrectly charged Ser-tRNA(Ala) and Gly-tRNA(Ala) via its editing domain. This chain is Alanine--tRNA ligase, found in Mesomycoplasma hyopneumoniae (strain 232) (Mycoplasma hyopneumoniae).